Here is a 495-residue protein sequence, read N- to C-terminus: Sialin (495 aa).

The tract at residues 1–24 (MKSPVSDLAPSDGEEGSDRTPLLQ) is disordered. Ser-3 is modified (phosphoserine). Residues 22 to 23 (LL) carry the Dileucine internalization motif motif. Residues 42 to 62 (LAFLSFFGFFVLYSLRVNLSV) form a helical membrane-spanning segment. 3 N-linked (GlcNAc...) asparagine glycosylation sites follow: Asn-71, Asn-77, and Asn-95. The next 11 helical transmembrane spans lie at 110–130 (WILGSFFYGYIITQIPGGYVA), 137–157 (LLLGFGIFATAIFTLFTPLAA), 159–179 (FGVGALVALRALEGLGEGVTY), 201–221 (ISYAGAQLGTVVSLPLSGVIC), 228–248 (YVFYFFGIVGIIWFILWICLV), 289–309 (LPLWAIVVAHFSYNWTFYTLL), 329–349 (FLSAVPYLGCWLCMILSGQAA), 366–386 (VFSLIGMIGPAIFLVAAGFIG), 392–412 (AVAFLTISTTLGGFCSSGFSI), 424–444 (ILLGITNTFATIPGMIGPIIA), and 458–478 (TVFCIAAAINVFGAIFFTLFA).

It belongs to the major facilitator superfamily. Sodium/anion cotransporter family. Significantly expressed in lung endothelial cells, and much less in liver.

The protein localises to the basolateral cell membrane. It is found in the cytoplasmic vesicle. It localises to the secretory vesicle. The protein resides in the synaptic vesicle membrane. Its subcellular location is the lysosome membrane. It catalyses the reaction N-acetylneuraminate(in) + H(+)(in) = N-acetylneuraminate(out) + H(+)(out). It carries out the reaction D-glucuronate(out) + H(+)(out) = D-glucuronate(in) + H(+)(in). The catalysed reaction is 2 nitrate(out) + H(+)(out) = 2 nitrate(in) + H(+)(in). The enzyme catalyses L-aspartate(out) = L-aspartate(in). It catalyses the reaction L-glutamate(out) = L-glutamate(in). It carries out the reaction N-acetyl-L-aspartyl-L-glutamate(out) = N-acetyl-L-aspartyl-L-glutamate(in). Its function is as follows. Multifunctional anion transporter that operates via two distinct transport mechanisms, namely proton-coupled anion cotransport and membrane potential-dependent anion transport. Electroneutral proton-coupled acidic monosaccharide symporter, with a sugar to proton stoichiometry of 1:1. Exports glucuronic acid and free sialic acid derived from sialoglycoconjugate degradation out of lysosomes, driven by outwardly directed lysosomal pH gradient. May regulate lysosome function and metabolism of sialylated conjugates that impact oligodendrocyte lineage differentiation and myelinogenesis in the central nervous system. Electrogenic proton-coupled nitrate symporter that transports nitrate ions across the basolateral membrane of salivary gland acinar cells, with nitrate to proton stoichiometry of 2:1. May contribute to nitrate clearance from serum by salivary glands, where it is further concentrated and secreted in the saliva. Uses membrane potential to drive the uptake of acidic amino acids and peptides into synaptic vesicles. Responsible for synaptic vesicular storage of L-aspartate and L-glutamate in pinealocytes as well as vesicular uptake of N-acetyl-L-aspartyl-L-glutamate neuropeptide, relevant to aspartegic-associated glutamatergic neurotransmission and activation of metabotropic receptors that inhibit subsequent transmitter release. Receptor for CM101, a polysaccharide produced by group B Streptococcus with antipathoangiogenic properties. This is Sialin (SLC17A5) from Ovis aries (Sheep).